The sequence spans 130 residues: Small ribosomal subunit protein uS8 (130 aa).

Belongs to the universal ribosomal protein uS8 family. In terms of assembly, part of the 30S ribosomal subunit. Contacts proteins S5 and S12.

Its function is as follows. One of the primary rRNA binding proteins, it binds directly to 16S rRNA central domain where it helps coordinate assembly of the platform of the 30S subunit. The protein is Small ribosomal subunit protein uS8 of Buchnera aphidicola subsp. Acyrthosiphon kondoi (Acyrthosiphon kondoi symbiotic bacterium).